We begin with the raw amino-acid sequence, 241 residues long: E3 ubiquitin-protein ligase RNF166 (241 aa).

The disordered stretch occupies residues 8-30; that stretch reads VASSQHRQHHSHQSLATPSSADS. Residues 37–77 form an RING-type zinc finger; the sequence is CPICLEVYYKPVAIGSCGHTFCGECLQPCLQVSSPLCPLCR. The Zn(2+) site is built by C102, C105, H117, and C121. The segment at 102 to 121 adopts a C2HC RNF-type zinc-finger fold; the sequence is CRGCSKKVTLAKMRAHISSC. A UIM domain is found at 225-241; it reads DEEAALQAALALSLSEN.

Its subcellular location is the cytoplasm. It catalyses the reaction S-ubiquitinyl-[E2 ubiquitin-conjugating enzyme]-L-cysteine + [acceptor protein]-L-lysine = [E2 ubiquitin-conjugating enzyme]-L-cysteine + N(6)-ubiquitinyl-[acceptor protein]-L-lysine.. It functions in the pathway protein modification; protein ubiquitination. In terms of biological role, E3 ubiquitin-protein ligase that promotes the ubiquitination of different substrates. This chain is E3 ubiquitin-protein ligase RNF166 (rnf166), found in Xenopus laevis (African clawed frog).